The chain runs to 342 residues: Protein-glutamate methylesterase/protein-glutamine glutaminase 4 (342 aa).

Residues 2–119 (NIGIVNDLPL…GGSADPSQPL (118 aa)) enclose the Response regulatory domain. Aspartate 53 is modified (4-aspartylphosphate). The 194-residue stretch at 144–337 (PAPQGALPPL…DQLISLVQRN (194 aa)) folds into the CheB-type methylesterase domain. Residues serine 159, histidine 186, and aspartate 279 contribute to the active site.

Belongs to the CheB family. Phosphorylated by CheA. Phosphorylation of the N-terminal regulatory domain activates the methylesterase activity.

The protein resides in the cytoplasm. The enzyme catalyses [protein]-L-glutamate 5-O-methyl ester + H2O = L-glutamyl-[protein] + methanol + H(+). It catalyses the reaction L-glutaminyl-[protein] + H2O = L-glutamyl-[protein] + NH4(+). Its function is as follows. Involved in chemotaxis. Part of a chemotaxis signal transduction system that modulates chemotaxis in response to various stimuli. Catalyzes the demethylation of specific methylglutamate residues introduced into the chemoreceptors (methyl-accepting chemotaxis proteins or MCP) by CheR. Also mediates the irreversible deamidation of specific glutamine residues to glutamic acid. This chain is Protein-glutamate methylesterase/protein-glutamine glutaminase 4, found in Burkholderia thailandensis (strain ATCC 700388 / DSM 13276 / CCUG 48851 / CIP 106301 / E264).